The chain runs to 117 residues: MTRIKRGVSSKFRHKKILKKTKGYYGARSRSYRIAFQAFIKAGQYAYRDRKNKKRTFRKIWICRINSAVRKHGLSYSCFMYKIKKLSIFIDRKILSDLAVLNKEAFSELIKKVKSIS.

Belongs to the bacterial ribosomal protein bL20 family.

Functionally, binds directly to 23S ribosomal RNA and is necessary for the in vitro assembly process of the 50S ribosomal subunit. It is not involved in the protein synthesizing functions of that subunit. In Wigglesworthia glossinidia brevipalpis, this protein is Large ribosomal subunit protein bL20.